The primary structure comprises 314 residues: uncharacterized protein (314 aa).

The N-terminal stretch at 1–18 (MKVSLLIFLIILVGVIKS) is a signal peptide. 6 N-linked (GlcNAc...) asparagine glycosylation sites follow: N43, N96, N109, N116, N117, and N161. The segment at 252–314 (SMRITKNNPH…PKSIDFHHLF (63 aa)) is disordered. Composition is skewed to low complexity over residues 257-268 (KNNPHLNNNNNN) and 285-296 (KTTTKTSTKTTS).

The protein resides in the secreted. This is an uncharacterized protein from Dictyostelium discoideum (Social amoeba).